An 812-amino-acid chain; its full sequence is Fibrous sheath CABYR-binding protein (812 aa).

The interval 1-66 is disordered; sequence MEESDEPEQP…SIGNIPGGKA (66 aa). 6 positions are modified to phosphoserine: Ser25, Ser57, Ser125, Ser133, Ser184, and Ser273. Disordered stretches follow at residues 269-333, 367-388, 424-547, and 672-741; these read IQAP…PKGT, DSGR…PPLS, FEDQ…PPSL, and PAEE…PSVK. Residues 275 to 286 are compositionally biased toward low complexity; that stretch reads AKETSAAETTAK. Positions 488–501 are enriched in pro residues; it reads EVPPLPTEEWPLPP. Positions 502 to 513 are enriched in low complexity; it reads VTEESPAEVTPP. Residues 514-528 show a composition bias toward acidic residues; that stretch reads ETEEGPIEPAEEGPE.

Interacts with CABYR.

Its subcellular location is the cell projection. The protein localises to the cilium. The protein resides in the flagellum. In terms of biological role, may be involved in the later stages of fibrous sheath biogenesis. Binds calcium. This chain is Fibrous sheath CABYR-binding protein, found in Rattus norvegicus (Rat).